A 318-amino-acid chain; its full sequence is Ferrochelatase (318 aa).

Fe cation is bound by residues histidine 194 and glutamate 275.

Belongs to the ferrochelatase family.

It is found in the cytoplasm. The catalysed reaction is heme b + 2 H(+) = protoporphyrin IX + Fe(2+). The protein operates within porphyrin-containing compound metabolism; protoheme biosynthesis; protoheme from protoporphyrin-IX: step 1/1. In terms of biological role, catalyzes the ferrous insertion into protoporphyrin IX. The sequence is that of Ferrochelatase from Xanthomonas axonopodis pv. citri (strain 306).